The primary structure comprises 749 residues: 5-methyltetrahydropteroyltriglutamate--homocysteine methyltransferase (749 aa).

5-methyltetrahydropteroyltri-L-glutamate contacts are provided by residues 15–18 (RELK) and lysine 114. Residues 425–427 (IGS) and glutamate 478 contribute to the L-homocysteine site. Residues 425–427 (IGS) and glutamate 478 contribute to the L-methionine site. Position 555 (tryptophan 555) interacts with 5-methyltetrahydropteroyltri-L-glutamate. Aspartate 593 contacts L-homocysteine. An L-methionine-binding site is contributed by aspartate 593. Glutamate 599 is a 5-methyltetrahydropteroyltri-L-glutamate binding site. Zn(2+) is bound by residues histidine 636, cysteine 638, and glutamate 660. Histidine 689 acts as the Proton donor in catalysis. Cysteine 721 serves as a coordination point for Zn(2+).

Belongs to the vitamin-B12 independent methionine synthase family. Zn(2+) serves as cofactor.

The catalysed reaction is 5-methyltetrahydropteroyltri-L-glutamate + L-homocysteine = tetrahydropteroyltri-L-glutamate + L-methionine. It participates in amino-acid biosynthesis; L-methionine biosynthesis via de novo pathway; L-methionine from L-homocysteine (MetE route): step 1/1. Functionally, catalyzes the transfer of a methyl group from 5-methyltetrahydrofolate to homocysteine resulting in methionine formation. The sequence is that of 5-methyltetrahydropteroyltriglutamate--homocysteine methyltransferase from Streptococcus pneumoniae serotype 19F (strain G54).